The following is a 71-amino-acid chain: Antitoxin VapB26 (71 aa).

Its function is as follows. Antitoxin component of a type II toxin-antitoxin (TA) system. Upon expression in M.smegmatis neutralizes the effect of cognate toxin VapC26. This chain is Antitoxin VapB26 (vapB26), found in Mycobacterium tuberculosis (strain ATCC 25618 / H37Rv).